The primary structure comprises 217 residues: tRNA (guanine-N(7)-)-methyltransferase (217 aa).

S-adenosyl-L-methionine-binding residues include Glu-44, Glu-69, Asp-96, and Asp-118. The active site involves Asp-118. Substrate is bound by residues Lys-122, Asp-154, and 191–194; that span reads TEYE.

The protein belongs to the class I-like SAM-binding methyltransferase superfamily. TrmB family.

It catalyses the reaction guanosine(46) in tRNA + S-adenosyl-L-methionine = N(7)-methylguanosine(46) in tRNA + S-adenosyl-L-homocysteine. Its pathway is tRNA modification; N(7)-methylguanine-tRNA biosynthesis. Functionally, catalyzes the formation of N(7)-methylguanine at position 46 (m7G46) in tRNA. In Bacillus anthracis (strain CDC 684 / NRRL 3495), this protein is tRNA (guanine-N(7)-)-methyltransferase.